A 537-amino-acid chain; its full sequence is MSRRVEFDLSTEDHSDRRRTNTFSSSADEDGVPNEVADYLVYFSRMVDEQNVPEILTLYDQAFPDLTERFFRDRMWPDENVVERIIGPGNKLFIILYKELYYRQLYARNTRGPLLVHRYESFMNYQELFSELLSSKDPIPLSLPNVWLWDIIDEFVYQFQAFCLYKANPGKRNADEVEDLINIEENQNAWNIYPVLNILYSLLSKSQIVEQLKALKEKRNPDSVADEFGQSDLYFKLGYFALIGLLRTHVLLGDYHQALKTVQYVDIDPKGIYNTVPTCLVTLHYFVGFSHLMMRNYGEATKMFVNCLLYIQRTKSVQNQQPSKKNFQYDVIGKTWDQLFHLLAICLAIQPQRIDESIASQLSERCGERMMHMANGNIDEFRNAFATGCPKFLSPTTVVYEGVNQSKEPLLRQTQSFLEGIESQMALPVLRGYLKLYTTLPTKKLASFMDVDDEHYDSFIGKLLTYKMIVNELGKEAGPSSADDDEPQTDIDFYVDRDMINIADTKVARHVGEHFIRHIQKLQEVQDVLKRLDIQKP.

Residues 1–19 (MSRRVEFDLSTEDHSDRRR) show a composition bias toward basic and acidic residues. The interval 1-30 (MSRRVEFDLSTEDHSDRRRTNTFSSSADED) is disordered. One can recognise a PCI domain in the interval 299–487 (EATKMFVNCL…GPSSADDDEP (189 aa)).

Belongs to the eIF-3 subunit L family. In terms of assembly, component of the eukaryotic translation initiation factor 3 (eIF-3) complex.

It is found in the cytoplasm. Its function is as follows. Component of the eukaryotic translation initiation factor 3 (eIF-3) complex, which is involved in protein synthesis of a specialized repertoire of mRNAs and, together with other initiation factors, stimulates binding of mRNA and methionyl-tRNAi to the 40S ribosome. The eIF-3 complex specifically targets and initiates translation of a subset of mRNAs involved in cell proliferation. This Caenorhabditis elegans protein is Eukaryotic translation initiation factor 3 subunit L.